A 591-amino-acid polypeptide reads, in one-letter code: Monoterpene synthase 8, chloroplastic (591 aa).

A chloroplast-targeting transit peptide spans 1–46 (MSLLLAPPSYFPFRGLRRSTAAKQPPCLRLVKCTADRQSPEAARRS). Mg(2+) contacts are provided by Asp346, Asp350, and Glu497. A DDXXD motif motif is present at residues 346-350 (DDVYD).

This sequence belongs to the terpene synthase family. Tpsa subfamily. Requires Mg(2+) as cofactor. Mn(2+) serves as cofactor. As to expression, highly expressed in flowers, petals and sepals, but almost undetectable in vegetative organs.

It localises to the plastid. Its subcellular location is the chloroplast. The catalysed reaction is (2E)-geranyl diphosphate + H2O = (R)-linalool + diphosphate. It carries out the reaction (2E)-geranyl diphosphate + H2O = (S)-linalool + diphosphate. It catalyses the reaction (2E,6E)-farnesyl diphosphate = (S)-beta-bisabolene + diphosphate. The enzyme catalyses (2E,6E)-farnesyl diphosphate = (E,R)-alpha-bisabolene + diphosphate. The catalysed reaction is (2E,6E)-farnesyl diphosphate = (E)-beta-farnesene + diphosphate. It carries out the reaction (2E,6E)-farnesyl diphosphate = beta-sesquiphellandrene + diphosphate. It catalyses the reaction (2E,6E)-farnesyl diphosphate = (1S,5S,6R)-alpha-bergamotene + diphosphate. Its pathway is secondary metabolite biosynthesis; terpenoid biosynthesis. Functionally, sesquiterpene and monoterpene synthase involved in the biosynthesis of volatile compounds present in floral scent. Mediates the conversion of (2E)-geranyl diphosphate (GPP) into linalool, with trace levels of myrcene, limonene and (Z)-beta-ocimene. Also acts as a sesquiterpene synthase by catalyzing the conversion of farnesyl diphosphate (FPP) to alpha-bergamotene and beta-bisabolene and to minor products including alpha-curcumene, cis-alpha-bisabolene, beta-farnesene and beta-sesquiphellandrene, as well as seven other unidentified sesquiterpenes. This Hedychium coronarium (White butterfly ginger-lily) protein is Monoterpene synthase 8, chloroplastic.